The primary structure comprises 97 residues: Cell division topological specificity factor (97 aa).

It belongs to the MinE family.

Functionally, prevents the cell division inhibition by proteins MinC and MinD at internal division sites while permitting inhibition at polar sites. This ensures cell division at the proper site by restricting the formation of a division septum at the midpoint of the long axis of the cell. This Synechococcus sp. (strain RCC307) protein is Cell division topological specificity factor.